Consider the following 45-residue polypeptide: Iota-conotoxin-like R11.13 (45 aa).

Intrachain disulfides connect C5–C19, C12–C22, C18–C27, and C21–C36. The residue at position 43 (L43) is a D-leucine. Position 45 (R45) is a propeptide, removed by a carboxypeptidase.

It belongs to the conotoxin I1 superfamily. Expressed by the venom duct.

It is found in the secreted. In terms of biological role, iota-conotoxins bind to voltage-gated sodium channels (Nav) and act as agonists by shifting the voltage-dependence of activation to more hyperpolarized levels. Produces general excitatory symptoms. The polypeptide is Iota-conotoxin-like R11.13 (Conus radiatus (Rayed cone)).